The chain runs to 768 residues: Actin filament-associated protein 1-like 1 (768 aa).

A disordered region spans residues 83–145 (LRDMSDDGEP…GKSPEYISSH (63 aa)). Phosphoserine occurs at positions 87, 93, 97, 103, and 153. Over residues 165–185 (SYPTTRMNGELKNSYNDSDAM) the composition is skewed to polar residues. Residues 165 to 211 (SYPTTRMNGELKNSYNDSDAMSSSYESYDEEEEEEKGRQPKHQWPSE) are disordered. The PH 1 domain maps to 220–316 (DCRICAFLLR…WLKVIREVSR (97 aa)). A phosphoserine mark is found at Ser329 and Ser343. The segment covering 340 to 349 (KRLSQEKQNS) has biased composition (basic and acidic residues). The segment at 340–382 (KRLSQEKQNSDSDSLGMNDSGSTLGRREACEHGKGKKNSLAEL) is disordered. Over residues 350–362 (DSDSLGMNDSGST) the composition is skewed to polar residues. The 95-residue stretch at 418–512 (EVPCCGYLNV…WLGLLLVEMG (95 aa)) folds into the PH 2 domain. Tyr557 carries the phosphotyrosine modification. Positions 564-609 (KVQDEEPQRPTGAQVKRHASSCSEKSHRADPQVKVKRHASSANQYK) are disordered. Over residues 587–596 (EKSHRADPQV) the composition is skewed to basic and acidic residues. The stretch at 611 to 701 (GKNRAEEDAR…AVKERLQQSL (91 aa)) forms a coiled coil. Residues 705–768 (PALGLSVSNK…KAKEWEMKKT (64 aa)) are disordered. The segment covering 710–734 (SVSNKNKSQDTTNKPQSNAPEQSLP) has biased composition (polar residues). At Ser747 the chain carries Phosphoserine. Residues 759–768 (KAKEWEMKKT) show a composition bias toward basic and acidic residues.

In terms of assembly, interacts with CTTN.

It localises to the cytoplasm. The protein resides in the cell projection. Its subcellular location is the podosome. It is found in the invadopodium. The protein localises to the cytoskeleton. It localises to the stress fiber. May be involved in podosome and invadosome formation. The chain is Actin filament-associated protein 1-like 1 (Afap1l1) from Mus musculus (Mouse).